Here is a 382-residue protein sequence, read N- to C-terminus: Gap junction alpha-1 protein (382 aa).

Residues 2-23 are Cytoplasmic-facing; that stretch reads GGWSALAKLLGKVQAYSPAGGK. Ser-5 is modified (phosphoserine). A helical membrane pass occupies residues 24–44; the sequence is VWLSVLFIFRILLLGTAVESA. At 45-76 the chain is on the extracellular side; it reads WGDEQSAFRCNTQQPGCENVCYDKSFPISHVR. Intrachain disulfides connect Cys-54–Cys-192 and Cys-187–Cys-198. A helical membrane pass occupies residues 77-97; it reads FWVLQIIFVSVPTLLYLAHVF. Residues 98 to 155 are Cytoplasmic-facing; the sequence is YVMRKEEKLNKKEEELKVAQTDGANVDMHLKQIEIKKFKYGIEEHGKVKMRGGLLRTY. Lys-144 is covalently cross-linked (Glycyl lysine isopeptide (Lys-Gly) (interchain with G-Cter in SUMO)). A helical transmembrane segment spans residues 156–176; sequence IISILFKSVFEVAFLLIQWYI. At 177–207 the chain is on the extracellular side; the sequence is YGFSLSAVYTCKREPCPHQVDCFLSRPTEKT. A helical transmembrane segment spans residues 208–228; sequence IFIIFMLVVSLVSLALNIIEL. Topologically, residues 229–382 are cytoplasmic; that stretch reads FYVFFKGVKD…SRPRPDDLEI (154 aa). Lys-237 participates in a covalent cross-link: Glycyl lysine isopeptide (Lys-Gly) (interchain with G-Cter in SUMO). The interval 244–382 is interaction with NOV; that stretch reads SDPYHATTGP…SRPRPDDLEI (139 aa). Tyr-247 carries the phosphotyrosine modification. 3 positions are modified to phosphoserine: Ser-255, Ser-257, and Ser-262. Residues 264–382 form an interaction with UBQLN4 region; that stretch reads EYAYFNGCSS…SRPRPDDLEI (119 aa). Cys-271 carries the S-nitrosocysteine modification. Phosphothreonine is present on Thr-275. A phosphoserine mark is found at Ser-306 and Ser-314. Residues 317–332 are compositionally biased toward polar residues; sequence QNRMGQAGSTISNSHA. The interval 317 to 382 is disordered; that stretch reads QNRMGQAGST…SRPRPDDLEI (66 aa). The residue at position 325 (Ser-325) is a Phosphoserine; by CK1. A Phosphothreonine modification is found at Thr-326. Residues Ser-328 and Ser-330 each carry the phosphoserine; by CK1 modification. Ser-344 and Ser-365 each carry phosphoserine. Residues 362 to 374 are compositionally biased toward low complexity; it reads RPSSRASSRASSR. Residue Ser-368 is modified to Phosphoserine; by PKC/PRKCG and PKC/PRKCD. 2 positions are modified to phosphoserine: Ser-369 and Ser-373.

Belongs to the connexin family. Alpha-type (group II) subfamily. A connexon is composed of a hexamer of connexins. Interacts with SGSM3. Interacts with RIC1/CIP150. Interacts with CNST and CSNK1D. Interacts (via C-terminus) with TJP1. Interacts (via C-terminus) with SRC (via SH3 domain). Interacts (not ubiquitinated) with UBQLN4 (via UBA domain). Interacts with NOV. Interacts with TMEM65. Interacts with ANK3/ANKG and PKP2. Phosphorylation at Ser-325, Ser-328 and Ser-330 by CK1 modulates gap junction assembly. Phosphorylated at Ser-368 by PRKCG; phosphorylation induces disassembly of gap junction plaques and inhibition of gap junction activity. Phosphorylation at Ser-368 by PRKCD triggers its internalization into small vesicles leading to proteasome-mediated degradation. In terms of processing, sumoylated with SUMO1, SUMO2 and SUMO3, which may regulate the level of functional Cx43 gap junctions at the plasma membrane. May be desumoylated by SENP1 or SENP2. Post-translationally, S-nitrosylation at Cys-271 is enriched at the muscle endothelial gap junction in arteries, it augments channel permeability and may regulate of smooth muscle cell to endothelial cell communication. Acetylated in the developing cortex; leading to delocalization from the cell membrane.

The protein resides in the cell membrane. Its subcellular location is the cell junction. It is found in the gap junction. It localises to the endoplasmic reticulum. Gap junction protein that acts as a regulator of bladder capacity. A gap junction consists of a cluster of closely packed pairs of transmembrane channels, the connexons, through which materials of low MW diffuse from one cell to a neighboring cell. May play a critical role in the physiology of hearing by participating in the recycling of potassium to the cochlear endolymph. Negative regulator of bladder functional capacity: acts by enhancing intercellular electrical and chemical transmission, thus sensitizing bladder muscles to cholinergic neural stimuli and causing them to contract. May play a role in cell growth inhibition through the regulation of NOV expression and localization. Plays an essential role in gap junction communication in the ventricles. The protein is Gap junction alpha-1 protein (GJA1) of Canis lupus familiaris (Dog).